Reading from the N-terminus, the 63-residue chain is Large ribosomal subunit protein uL29 (63 aa).

Belongs to the universal ribosomal protein uL29 family.

This Pseudoalteromonas translucida (strain TAC 125) protein is Large ribosomal subunit protein uL29.